The primary structure comprises 403 residues: Tryptophan synthase beta chain 1 (403 aa).

K93 carries the N6-(pyridoxal phosphate)lysine modification.

The protein belongs to the TrpB family. Tetramer of two alpha and two beta chains. It depends on pyridoxal 5'-phosphate as a cofactor.

The catalysed reaction is (1S,2R)-1-C-(indol-3-yl)glycerol 3-phosphate + L-serine = D-glyceraldehyde 3-phosphate + L-tryptophan + H2O. It participates in amino-acid biosynthesis; L-tryptophan biosynthesis; L-tryptophan from chorismate: step 5/5. Functionally, the beta subunit is responsible for the synthesis of L-tryptophan from indole and L-serine. In Methanosarcina acetivorans (strain ATCC 35395 / DSM 2834 / JCM 12185 / C2A), this protein is Tryptophan synthase beta chain 1 (trpB1).